The primary structure comprises 694 residues: Phosphatase and actin regulator 4-A (694 aa).

2 stretches are compositionally biased toward basic and acidic residues: residues 1-13 (MEDRSEEGGDHSE) and 46-72 (SSDSFRETSEVLERKISTRKPREELIK). Disordered regions lie at residues 1–29 (MEDRSEEGGDHSEMPSAPSTPPSKRKSKF), 42–169 (RKRK…QPLP), 192–403 (VNEV…HIRI), 426–445 (LFMQNDMGPSEEGTRVRSLP), and 450–572 (LLKV…QIRQ). The stretch at 55-80 (EVLERKISTRKPREELIKRGLLVEVP) is one RPEL 1 repeat. Residues 240–267 (SISTSVTQESAVAGQKSDSSNRLQSSAP) are compositionally biased toward polar residues. Positions 300 to 317 (AELSLALAGSPLSPAGSR) are enriched in low complexity. Pro residues-rich tracts occupy residues 318-327 (PSPPLPPKRA) and 372-381 (SNPPVPPLTL). Composition is skewed to acidic residues over residues 455–467 (DDEDDESLEDESL), 499–511 (QEEEEGGVSDTDS), and 519–529 (DDEEEEEEEET). 2 RPEL repeats span residues 576–601 (TQLNRRLSQRPTAEELEQRNILQKNE) and 613–638 (RRLTRKLSQRPTVAELVERKILRFNE).

It belongs to the phosphatase and actin regulator family. As to quaternary structure, binds ppp1ca and actin.

The protein resides in the cytoplasm. The protein localises to the cell projection. Its subcellular location is the lamellipodium. Regulator of protein phosphatase 1 (PP1) required for neural tube and optic fissure closure, and enteric neural crest cell (ENCCs) migration during development. Acts as an activator of PP1. During neural tube closure, localizes to the ventral neural tube and activates PP1, leading to down-regulate cell proliferation within cranial neural tissue and the neural retina. Also acts as a regulator of migration of enteric neural crest cells (ENCCs) by activating PP1, leading to repression of the integrin signaling through the rho/rock pathway. The polypeptide is Phosphatase and actin regulator 4-A (phactr4-a) (Xenopus laevis (African clawed frog)).